Consider the following 464-residue polypeptide: Protein FAM90A13 (464 aa).

Disordered regions lie at residues 1–42 (MMAR…DPRL), 69–389 (VPAT…HDGA), and 411–437 (APSF…SEAP). Basic and acidic residues-rich tracts occupy residues 74 to 89 (GKKE…KPRG) and 97 to 114 (NKDK…DPQR). Positions 180-197 (LASLSPLRKASLSSSSSL) are enriched in low complexity.

It belongs to the FAM90 family.

The sequence is that of Protein FAM90A13 from Homo sapiens (Human).